The chain runs to 69 residues: Disintegrin VLO5B (69 aa).

Positions 1 to 66 (MNSANPCCDP…DCPRNPWKSE (66 aa)) constitute a Disintegrin domain. 4 disulfide bridges follow: Cys-7–Cys-30, Cys-21–Cys-27, Cys-26–Cys-51, and Cys-39–Cys-58. The Cell attachment site; atypical (MLD) signature appears at 43-45 (MLD).

It belongs to the disintegrin family. Dimeric disintegrin subfamily. In terms of assembly, heterodimer with VLO5A; disulfide-linked. In terms of tissue distribution, expressed by the venom gland.

It is found in the secreted. Poor inhibitor of platelet aggregation. The disintegrin inhibits the adhesion of the alpha-4/beta-1 (ITGA4/ITGB1) integrin to VCAM-1. Inhibition on alpha-2b/beta-3 (ITGA2B/ITGB3) is low. The chain is Disintegrin VLO5B from Macrovipera lebetina obtusa (Levant blunt-nosed viper).